The primary structure comprises 859 residues: Paladin (859 aa).

Residues 1-34 (MGTTASTAQQTVSAGTSLEGLQGGSSSSMDSQHS) form a disordered region. Gly-2 carries N-myristoyl glycine lipidation. Ser-89 is subject to Phosphoserine.

This sequence belongs to the paladin family. Vascular expression detected in the central nervous system, kidney, lung, heart, skeletal muscle, white adipose tissue (WAT), brown adipose tissue, liver, pancreas and spleen. Not expressed in all vessels: for instance, not expressed in capillaries in the brain, and expressed mainly in large vessels in the heart, WAT, liver, pancreas and kidney. Predominant nonvascular expression in myocardium and lung mesenchyme. In large vessels, primarily expressed by smooth muscle cells, but occasionally detected at low levels in the endothelium. Expressed in various cells of the hematopoietic lineage.

It is found in the cytoplasm. The protein resides in the cytosol. The chain is Paladin (Pald1) from Mus musculus (Mouse).